A 224-amino-acid chain; its full sequence is Cardosin-E (224 aa).

The region spanning 1–221 (DSGSAIVALT…DYGNLLVGFA (221 aa)) is the Peptidase A1 domain. The active site involves D35. C125 and C129 form a disulfide bridge. D134 is an active-site residue.

This sequence belongs to the peptidase A1 family. In terms of assembly, heterodimer of a light chain and a heavy chain. An intermediate form is produced first, and undergoes proteolytic processing to remove the internal plant-specific insert (PSI) and the propeptide. Post-translationally, N-glycosylated. Pistils.

The protein localises to the microsome membrane. It localises to the protein storage vacuole. The protein resides in the secreted. It is found in the cell wall. Its subcellular location is the extracellular space. The protein localises to the extracellular matrix. Its activity is regulated as follows. Inhibited by pepstatin. In terms of biological role, aspartic protease with a high preference for bonds between hydrophobic residues. This is Cardosin-E from Cynara cardunculus (Cardoon).